The primary structure comprises 106 residues: MSKAQRMRIKLKSFDYKLLDQSARKIVETAKSTGAEVSGPVPLPTDREVITIIRAPHKYKDSREQFEIKTHKRLIDIIKPTQKTVDALMRVELPAGVDIEIKLKEV.

The protein belongs to the universal ribosomal protein uS10 family. Part of the 30S ribosomal subunit.

Its function is as follows. Involved in the binding of tRNA to the ribosomes. This Caldicellulosiruptor saccharolyticus (strain ATCC 43494 / DSM 8903 / Tp8T 6331) protein is Small ribosomal subunit protein uS10.